Here is a 303-residue protein sequence, read N- to C-terminus: N-acetyl-D-glucosamine kinase (303 aa).

ATP contacts are provided by residues 4 to 11 and 133 to 140; these read GFDIGGTK and GVGGGLVL. His-157, Cys-177, Cys-179, and Cys-184 together coordinate Zn(2+).

This sequence belongs to the ROK (NagC/XylR) family. NagK subfamily.

It catalyses the reaction N-acetyl-D-glucosamine + ATP = N-acetyl-D-glucosamine 6-phosphate + ADP + H(+). Its pathway is cell wall biogenesis; peptidoglycan recycling. Its function is as follows. Catalyzes the phosphorylation of N-acetyl-D-glucosamine (GlcNAc) derived from cell-wall degradation, yielding GlcNAc-6-P. In Salmonella dublin (strain CT_02021853), this protein is N-acetyl-D-glucosamine kinase.